The chain runs to 219 residues: Elongation factor Ts (219 aa).

Residues 83 to 86 are involved in Mg(2+) ion dislocation from EF-Tu; sequence TDFV.

It belongs to the EF-Ts family.

It is found in the cytoplasm. Its function is as follows. Associates with the EF-Tu.GDP complex and induces the exchange of GDP to GTP. It remains bound to the aminoacyl-tRNA.EF-Tu.GTP complex up to the GTP hydrolysis stage on the ribosome. The protein is Elongation factor Ts of Synechococcus sp. (strain WH7803).